Here is a 26-residue protein sequence, read N- to C-terminus: MGDCGCSGASSCNCGSGCSCSNCGSK.

The segment covering 1 to 14 (MGDCGCSGASSCNC) has biased composition (low complexity). The interval 1–26 (MGDCGCSGASSCNCGSGCSCSNCGSK) is disordered. Residues Cys-4, Cys-6, Cys-12, Cys-14, Cys-18, Cys-20, and Cys-23 each coordinate Cu(+). Residues 15 to 26 (GSGCSCSNCGSK) are compositionally biased toward cys residues.

Belongs to the metallothionein superfamily. Type 8 family.

The protein is Metallothionein (cmt) of Neurospora crassa (strain ATCC 24698 / 74-OR23-1A / CBS 708.71 / DSM 1257 / FGSC 987).